The sequence spans 427 residues: Large ribosomal subunit protein uL4 (427 aa).

Alanine 2 is subject to N-acetylalanine. Residue lysine 14 is modified to N6-acetyllysine. Omega-N-methylarginine is present on arginine 97. An N6-acetyllysine modification is found at lysine 106. Lysine 239 participates in a covalent cross-link: Glycyl lysine isopeptide (Lys-Gly) (interchain with G-Cter in SUMO2). Lysine 259 is subject to N6-acetyllysine. At threonine 266 the chain carries Phosphothreonine. A phosphoserine mark is found at serine 290 and serine 295. The residue at position 300 (arginine 300) is a Citrulline. Residue lysine 327 forms a Glycyl lysine isopeptide (Lys-Gly) (interchain with G-Cter in SUMO2) linkage. Lysine 333 and lysine 353 each carry N6-acetyllysine. Lysine 364 bears the N6-acetyllysine; alternate mark. Lysine 364 is covalently cross-linked (Glycyl lysine isopeptide (Lys-Gly) (interchain with G-Cter in SUMO1); alternate). Serine 365 carries the phosphoserine modification. The interval 369–427 is disordered; that stretch reads AAVAGKKPVVGKKGKKAAVGVKKQKKPLVGKKAAATKKPAPEKKPAEKKPTTEEKKPAA. The segment covering 377–397 has biased composition (basic residues); it reads VVGKKGKKAAVGVKKQKKPLV. Residues 407-427 are compositionally biased toward basic and acidic residues; that stretch reads PAPEKKPAEKKPTTEEKKPAA.

This sequence belongs to the universal ribosomal protein uL4 family. As to quaternary structure, component of the large ribosomal subunit. May bind IPO9 with low affinity. Interacts with RBM3. In terms of processing, citrullinated by PADI4.

It is found in the cytoplasm. Functionally, component of the large ribosomal subunit. The ribosome is a large ribonucleoprotein complex responsible for the synthesis of proteins in the cell. The polypeptide is Large ribosomal subunit protein uL4 (RPL4) (Homo sapiens (Human)).